The sequence spans 321 residues: Ribose-phosphate pyrophosphokinase (321 aa).

Residues 44-46 (DGE) and 103-104 (RQ) each bind ATP. Residues His-137 and Asp-179 each contribute to the Mg(2+) site. Lys-202 is a catalytic residue. D-ribose 5-phosphate-binding positions include Arg-204, Asp-228, and 232–236 (DTAGT).

This sequence belongs to the ribose-phosphate pyrophosphokinase family. Class I subfamily. As to quaternary structure, homohexamer. Requires Mg(2+) as cofactor.

Its subcellular location is the cytoplasm. The catalysed reaction is D-ribose 5-phosphate + ATP = 5-phospho-alpha-D-ribose 1-diphosphate + AMP + H(+). It functions in the pathway metabolic intermediate biosynthesis; 5-phospho-alpha-D-ribose 1-diphosphate biosynthesis; 5-phospho-alpha-D-ribose 1-diphosphate from D-ribose 5-phosphate (route I): step 1/1. Functionally, involved in the biosynthesis of the central metabolite phospho-alpha-D-ribosyl-1-pyrophosphate (PRPP) via the transfer of pyrophosphoryl group from ATP to 1-hydroxyl of ribose-5-phosphate (Rib-5-P). This chain is Ribose-phosphate pyrophosphokinase, found in Staphylococcus epidermidis (strain ATCC 35984 / DSM 28319 / BCRC 17069 / CCUG 31568 / BM 3577 / RP62A).